The sequence spans 481 residues: Ankyrin repeat, SAM and basic leucine zipper domain-containing protein 1 (481 aa).

Gly residues predominate over residues 1–16; that stretch reads MASGGLRGLAVAGGGE. Residues 1 to 23 form a disordered region; that stretch reads MASGGLRGLAVAGGGESSDSEDD. Residues Ser17, Ser18, and Ser20 each carry the phosphoserine modification. 6 ANK repeats span residues 45-74, 78-107, 110-144, 148-177, 181-210, and 214-243; these read EKNETFKKALTTGDISLVQELLDSGISVDS, YGWTPLMYAASIANVELVRVLLDRGANASF, DKQTILITACSARGSEEQILKCVELLLSRNADPNV, RLMTPIMYAARDGHPQVVAVLVAHGAEVNT, NGYTALTWAARQGHKNVVLKLLELGANKML, and DGKIPSEIAKRNKHLEIFNFLSLTLNPLEG. The 63-residue stretch at 272-334 folds into the SAM domain; that stretch reads SYTAFGDLEI…KILSALKELE (63 aa).

Interacts with DDX4, PIWIL1, RANBP9 and TDRD1.

The protein resides in the cytoplasm. Plays a central role during spermatogenesis by repressing transposable elements and preventing their mobilization, which is essential for the germline integrity. Acts via the piRNA metabolic process, which mediates the repression of transposable elements during meiosis by forming complexes composed of piRNAs and Piwi proteins and governs the methylation and subsequent repression of transposons. Its association with pi-bodies suggests a participation in the primary piRNAs metabolic process. Required prior to the pachytene stage to facilitate the production of multiple types of piRNAs, including those associated with repeats involved in the regulation of retrotransposons. May act by mediating protein-protein interactions during germ cell maturation. The protein is Ankyrin repeat, SAM and basic leucine zipper domain-containing protein 1 (ASZ1) of Microcebus murinus (Gray mouse lemur).